The following is a 450-amino-acid chain: Phosphoglucosamine mutase (450 aa).

Serine 102 (phosphoserine intermediate) is an active-site residue. Residues serine 102, aspartate 243, aspartate 245, and aspartate 247 each contribute to the Mg(2+) site. Residue serine 102 is modified to Phosphoserine.

Belongs to the phosphohexose mutase family. Mg(2+) is required as a cofactor. In terms of processing, activated by phosphorylation.

It catalyses the reaction alpha-D-glucosamine 1-phosphate = D-glucosamine 6-phosphate. Catalyzes the conversion of glucosamine-6-phosphate to glucosamine-1-phosphate. The sequence is that of Phosphoglucosamine mutase from Allorhizobium ampelinum (strain ATCC BAA-846 / DSM 112012 / S4) (Agrobacterium vitis (strain S4)).